Here is a 78-residue protein sequence, read N- to C-terminus: Pancreatic polypeptide prohormone (78 aa).

Positions 1 to 19 (LLLSTCVALLLQPPLGALG) are cleaved as a signal peptide. Residue Tyr-55 is modified to Tyrosine amide.

This sequence belongs to the NPY family.

Its subcellular location is the secreted. In terms of biological role, hormone secreted by pancreatic cells that acts as a regulator of pancreatic and gastrointestinal functions probably by signaling through the G protein-coupled receptor NPY4R2. In Ovis aries (Sheep), this protein is Pancreatic polypeptide prohormone (PPY).